A 347-amino-acid chain; its full sequence is Fructose-1,6-bisphosphatase (347 aa).

AMP contacts are provided by residues 19-23 (ILQEQ) and 44-48 (SGELS). Positions 85 and 114 each coordinate Mg(2+). Position 127–128 (127–128 (SY)) interacts with AMP. Mg(2+) is bound by residues Asp133, Ile135, and Asp136. 136 to 139 (DGSS) contacts substrate. AMP is bound at residue Lys155. Substrate-binding positions include 227–230 (NEGY), 258–263 (RYIGSM), Tyr279, and 288–290 (KLR). Glu294 serves as a coordination point for Mg(2+).

Belongs to the FBPase class 1 family. As to quaternary structure, homotetramer. Mg(2+) serves as cofactor.

It carries out the reaction beta-D-fructose 1,6-bisphosphate + H2O = beta-D-fructose 6-phosphate + phosphate. Its pathway is carbohydrate biosynthesis; gluconeogenesis. Subject to complex allosteric regulation. The enzyme can assume an active R-state, or an inactive T-state. Intermediate conformations may exist. AMP acts as allosteric inhibitor. AMP binding affects the turnover of bound substrate and not the affinity for substrate. The polypeptide is Fructose-1,6-bisphosphatase (fbp1) (Schizosaccharomyces pombe (strain 972 / ATCC 24843) (Fission yeast)).